The primary structure comprises 672 residues: Nuclear RNA export factor 1 (672 aa).

Disordered regions lie at residues 1-52 and 73-101; these read MPKR…SFKP and DEDD…IPRG. Over residues 40–49 the composition is skewed to basic residues; it reads RKDRNKRRVS. The RRM domain maps to 113–193; that stretch reads WYQVTLQNAQ…PRVRSGIPLV (81 aa). LRR repeat units lie at residues 255 to 280, 281 to 304, 305 to 332, and 333 to 360; these read DLEA…KRLP, NLKI…LRNL, SILE…EVRR, and KFPK…GRLL. In terms of domain architecture, NTF2 spans 375-529; the sequence is VVRQFLDQYF…FCIRNETIFI (155 aa). The interval 541 to 564 is disordered; it reads KRSQHQPAPGAMPSTSSAVTSPQA. Residues 553 to 563 show a composition bias toward polar residues; the sequence is PSTSSAVTSPQ. Position 561 is a phosphoserine (Ser-561). A TAP-C domain is found at 618-672; that stretch reads STKMQMIEAMSAQSQMNVIWSRKCLEETNWDFNHAAFVFEKLFKENKIPPEAFMK.

Belongs to the NXF family. Interacts with Nxt1. Interacts with ZC3H3. Forms a complex with Nup358/RanBP2, RanGAP and Nxt1. Interacts with Nup54 and Nup58. Interacts with Orc3 and Hpr1. In terms of tissue distribution, expressed ubiquitously.

Its subcellular location is the nucleus. It localises to the nucleoplasm. It is found in the cytoplasm. The protein localises to the nucleus envelope. Its function is as follows. Mediates the export of the majority of mRNAs from the nucleus to the cytoplasm. In ovarian follicle cells, plays a role in transposable element silencing regulation by enabling the nuclear export of flamenco (flam) transcripts and subsequent piRNA biogenesis. The polypeptide is Nuclear RNA export factor 1 (Drosophila melanogaster (Fruit fly)).